The chain runs to 132 residues: C-X-C motif chemokine 5 (132 aa).

Residues 1 to 40 (MSLQLRSSARIPSGSISPFMRMAPLAFLLLFTLPQHLAEA) form the signal peptide. 2 cysteine pairs are disulfide-bonded: cysteine 53/cysteine 79 and cysteine 55/cysteine 95.

The protein belongs to the intercrine alpha (chemokine CxC) family. Monomer. Homodimer. In terms of processing, GCP-2(1-78) and GCP-2(9-78) are produced by proteolytic cleavage after secretion from fibroblasts and epithelial cells. GCP-2(9-78) is the most prominent form. A number of additional N-terminal (processed between pos. 41 and 48) and C-terminal (processed between pos. 118 and 132) processed forms have been identified, probably also representing intermediate states.

It localises to the secreted. Functionally, may participate in the recruitment of inflammatory cells by injured or infected tissue. GCP-2(1-78) and, more potent, GCP-2(9-78) attract neutrophils and are involved in neutrophil activation. The sequence is that of C-X-C motif chemokine 5 (Cxcl5) from Mus musculus (Mouse).